The sequence spans 128 residues: Small ribosomal subunit protein bS6 (128 aa).

The protein belongs to the bacterial ribosomal protein bS6 family.

Its function is as follows. Binds together with bS18 to 16S ribosomal RNA. In Thermotoga petrophila (strain ATCC BAA-488 / DSM 13995 / JCM 10881 / RKU-1), this protein is Small ribosomal subunit protein bS6.